Consider the following 777-residue polypeptide: Nuclear autoantigenic sperm protein (777 aa).

Ala-2 is modified (N-acetylalanine). Lys-34 carries the N6-acetyllysine modification. One copy of the TPR 1 repeat lies at 44–77; sequence AKKLLGLGQKHLVMGDIPAAVNAFQEAASLLGKK. A histone-binding region spans residues 117-128; the sequence is EEEEGEKTEEES. A Phosphothreonine modification is found at Thr-124. A Phosphoserine modification is found at Ser-128. 3 stretches are compositionally biased toward basic and acidic residues: residues 152–186, 227–259, and 267–276; these read MGEKEAQKTEDKSLVKPEMDKEQETEMEKGGREDM, VTSKKPDQEIPGAEEGKSVSETDVQEECREKGG, and IEEKPKEASK. A disordered region spans residues 152-496; that stretch reads MGEKEAQKTE…ALENKSLQEN (345 aa). The interval 211 to 244 is histone-binding; that stretch reads EEGKGAAAPEGLSEAEVTSKKPDQEIPGAEEGKS. At Lys-243 the chain carries N6-acetyllysine. Ser-244 carries the phosphoserine modification. N6-acetyllysine is present on Lys-285. Basic and acidic residues predominate over residues 303–319; that stretch reads DEPKEQVAASESERGKA. Ser-312 is subject to Phosphoserine. Positions 342–353 are enriched in low complexity; sequence AADASAAEAGSE. Phosphoserine is present on residues Ser-399, Ser-411, and Ser-440. The histone-binding stretch occupies residues 458-501; it reads EQMKEGEETEGSEEEDKENDKAEETLNDSALENKSLQENEEEEI. Acidic residues predominate over residues 464-474; sequence EETEGSEEEDK. Thr-466 is modified (phosphothreonine). A phosphoserine mark is found at Ser-469, Ser-486, and Ser-492. The span at 484–493 shows a compositional bias: polar residues; it reads NDSALENKSL. TPR repeat units lie at residues 531–564 and 573–606; these read AQAHLKLGEVSVESENYLQAVEEFQACLNLQEQY and AETHYQLGLAYGYNSQYDEAVAQFSKSIEVIEKR. Residues 593–648 are a coiled coil; that stretch reads VAQFSKSIEVIEKRMAVLNEQMKEAEGSPTEYEKEIEELKELLPEIREKIEDAKES. A Phosphoserine modification is found at Ser-651. The segment covering 667 to 681 has biased composition (low complexity); sequence STSGFTPSGGSSSVS. A disordered region spans residues 667 to 777; it reads STSGFTPSGG…AGATVESTAC (111 aa). Thr-672 is modified (phosphothreonine). Phosphoserine occurs at positions 694 and 695. Residues 705–711 carry the Nuclear localization signal motif; that stretch reads VRKKRKP. Over residues 710 to 728 the composition is skewed to basic and acidic residues; it reads KPEEESPRKDDAKKAKQEP. The residue at position 715 (Ser-715) is a Phosphoserine. Lys-725 is covalently cross-linked (Glycyl lysine isopeptide (Lys-Gly) (interchain with G-Cter in SUMO1)). Ser-734 carries the phosphoserine modification.

The protein belongs to the NASP family. In terms of assembly, binds to linker H1 histones. Interacts with histones H2A, H2B, H3 and H4. Interacts with histone H3.3. Interacts with histones H3 and H4; NASP is a histone chaperone that stabilizes and maintains a soluble pool of histone H3-H4 dimers. Interacts with ASF1A and ASF1B; the interaction is probably indirect and mediated by H3-H4. Also binds to HSP90 in the cytoplasm. This interaction stimulates binding of NASP to H1-6/H1T.

The protein resides in the cytoplasm. It is found in the nucleus. In terms of biological role, component of the histone chaperone network. Binds and stabilizes histone H3-H4 not bound to chromatin to maintain a soluble reservoir and modulate degradation by chaperone-mediated autophagy. Required for DNA replication, normal cell cycle progression and cell proliferation. Forms a cytoplasmic complex with HSP90 and H1 linker histones and stimulates HSP90 ATPase activity. NASP and H1 histone are subsequently released from the complex and translocate to the nucleus where the histone is released for binding to DNA. This is Nuclear autoantigenic sperm protein from Bos taurus (Bovine).